Consider the following 309-residue polypeptide: HPr kinase/phosphorylase (309 aa).

Catalysis depends on residues His138 and Lys159. 153–160 lines the ATP pocket; that stretch reads GDSGIGKS. Ser160 is a Mg(2+) binding site. The active-site Proton acceptor; for phosphorylation activity. Proton donor; for dephosphorylation activity is the Asp177. The tract at residues 201 to 210 is important for the catalytic mechanism of both phosphorylation and dephosphorylation; the sequence is LEIRGVGIID. Residue Glu202 coordinates Mg(2+). The active site involves Arg243. The interval 264-269 is important for the catalytic mechanism of dephosphorylation; sequence PVKTGR.

It belongs to the HPrK/P family. As to quaternary structure, homohexamer. Mg(2+) is required as a cofactor.

It carries out the reaction [HPr protein]-L-serine + ATP = [HPr protein]-O-phospho-L-serine + ADP + H(+). It catalyses the reaction [HPr protein]-O-phospho-L-serine + phosphate + H(+) = [HPr protein]-L-serine + diphosphate. Functionally, catalyzes the ATP- as well as the pyrophosphate-dependent phosphorylation of a specific serine residue in HPr, a phosphocarrier protein of the phosphoenolpyruvate-dependent sugar phosphotransferase system (PTS). HprK/P also catalyzes the pyrophosphate-producing, inorganic phosphate-dependent dephosphorylation (phosphorolysis) of seryl-phosphorylated HPr (P-Ser-HPr). The two antagonistic activities of HprK/P are regulated by several intracellular metabolites, which change their concentration in response to the absence or presence of rapidly metabolisable carbon sources (glucose, fructose, etc.) in the growth medium. Therefore, by controlling the phosphorylation state of HPr, HPrK/P is a sensor enzyme that plays a major role in the regulation of carbon metabolism and sugar transport: it mediates carbon catabolite repression (CCR), and regulates PTS-catalyzed carbohydrate uptake and inducer exclusion. This chain is HPr kinase/phosphorylase, found in Streptococcus thermophilus (strain ATCC BAA-250 / LMG 18311).